A 353-amino-acid chain; its full sequence is 11-beta-hydroxysteroid dehydrogenase B (353 aa).

The chain crosses the membrane as a helical; Signal-anchor for type II membrane protein span at residues 10–30; that stretch reads LFVPPASLITLAFSWPALCFP. The short motif at 13-26 is the Proline-knob element; the sequence is PPASLITLAFSWPA. NADP(+)-binding positions include 54 to 80 and Asp-105; that span reads GASSGIGEQIAYEYALRRACLVLVARR. A substrate-binding site is contributed by Ser-184. Tyr-197 acts as the Proton acceptor in catalysis. NADP(+) is bound by residues 197 to 201 and Lys-201; that span reads YAAAK.

The protein belongs to the short-chain dehydrogenases/reductases (SDR) family. Expressed in seeds (at protein level).

The protein localises to the lipid droplet. The protein resides in the membrane. It carries out the reaction an 11beta-hydroxysteroid + NADP(+) = an 11-oxosteroid + NADPH + H(+). In terms of biological role, has dehydrogenase activity against 11 beta-hydroxysteroid and 17 beta-hydroxysteroid. May be involved in signal transduction regulated by various sterols. This is 11-beta-hydroxysteroid dehydrogenase B from Arachis hypogaea (Peanut).